A 450-amino-acid polypeptide reads, in one-letter code: Tubulin beta-3 chain (450 aa).

The short motif at 1 to 4 (MREI) is the MREI motif element. The GTP site is built by Gln-11, Glu-69, Ser-138, Gly-142, Thr-143, and Gly-144. Glu-69 provides a ligand contact to Mg(2+). Ser-172 is modified (phosphoserine; by CDK1). The GTP site is built by Asn-204 and Asn-226. The segment at 422–450 (YQQYQDATAEEEGEMYEDDDEESEAQGPK) is disordered. Residues 429–450 (TAEEEGEMYEDDDEESEAQGPK) are compositionally biased toward acidic residues. 5-glutamyl polyglutamate is present on Glu-438. Ser-444 bears the Phosphoserine mark.

It belongs to the tubulin family. In terms of assembly, heterodimer of alpha- and beta-tubulin. A typical microtubule is a hollow water-filled tube with an outer diameter of 25 nm and an inner diameter of 15 nM. Alpha-beta heterodimers associate head-to-tail to form protofilaments running lengthwise along the microtubule wall with the beta-tubulin subunit facing the microtubule plus end conferring a structural polarity. Microtubules usually have 13 protofilaments but different protofilament numbers can be found in some organisms and specialized cells. Interacts with gamma-tubulin; the interaction allows microtubules to nucleate from the gamma-tubulin ring complex (gTuRC). Interacts with UNC5C (via cytoplasmic domain); this interaction is decreased by NTN1/Netrin-1. Interacts with NLRP5/MATER at cytoskeleton microtubules. Interacts with DPYSL5. Interacts with CFAP61. It depends on Mg(2+) as a cofactor. Post-translationally, some glutamate residues at the C-terminus are polyglycylated, resulting in polyglycine chains on the gamma-carboxyl group. Glycylation is mainly limited to tubulin incorporated into axonemes (cilia and flagella) whereas glutamylation is prevalent in neuronal cells, centrioles, axonemes, and the mitotic spindle. Both modifications can coexist on the same protein on adjacent residues, and lowering polyglycylation levels increases polyglutamylation, and reciprocally. Cilia and flagella glycylation is required for their stability and maintenance. Flagella glycylation controls sperm motility. Some glutamate residues at the C-terminus are polyglutamylated, resulting in polyglutamate chains on the gamma-carboxyl group. Polyglutamylation plays a key role in microtubule severing by spastin (SPAST). SPAST preferentially recognizes and acts on microtubules decorated with short polyglutamate tails: severing activity by SPAST increases as the number of glutamates per tubulin rises from one to eight, but decreases beyond this glutamylation threshold. Glutamylation is also involved in cilia motility. In terms of processing, phosphorylated on Ser-172 by CDK1 during the cell cycle, from metaphase to telophase, but not in interphase. This phosphorylation inhibits tubulin incorporation into microtubules.

The protein resides in the cytoplasm. The protein localises to the cytoskeleton. It is found in the cell projection. It localises to the growth cone. Its subcellular location is the lamellipodium. The protein resides in the filopodium. Its function is as follows. Tubulin is the major constituent of microtubules, protein filaments consisting of alpha- and beta-tubulin heterodimers. Microtubules grow by the addition of GTP-tubulin dimers to the microtubule end, where a stabilizing cap forms. Below the cap, alpha-beta tubulin heterodimers are in GDP-bound state, owing to GTPase activity of alpha-tubulin. TUBB3 plays a critical role in proper axon guidance and maintenance. Binding of NTN1/Netrin-1 to its receptor UNC5C might cause dissociation of UNC5C from polymerized TUBB3 in microtubules and thereby lead to increased microtubule dynamics and axon repulsion. Plays a role in dorsal root ganglion axon projection towards the spinal cord. The sequence is that of Tubulin beta-3 chain (Tubb3) from Rattus norvegicus (Rat).